Here is a 110-residue protein sequence, read N- to C-terminus: Early nodulin-12A (110 aa).

A signal peptide spans 1–24 (MASFFLSSLVLFLAALILVPQGLA). The interval 31-110 (VYEPPVNGPP…HPTEEHNIHF (80 aa)) is disordered. The segment covering 32 to 43 (YEPPVNGPPVNK) has biased composition (pro residues). Tandem repeats lie at residues 34-38 (PPVNG), 39-43 (PPVNK), and 44-48 (PPQKE). Residues 34–88 (PPVNGPPVNKPPQKETPVHKPPQKETPVHKPPQKEPPRHKPPQKEPPRHKPPHKK) are 11 X 5 AA approximate tandem repeats of P-P-[VQRH]-[NKH]-[GKE]. The span at 45-81 (PQKETPVHKPPQKETPVHKPPQKEPPRHKPPQKEPPR) shows a compositional bias: basic and acidic residues. The 4; approximate repeat unit spans residues 49-53 (TPVHK). Repeat unit 5 spans residues 54 to 58 (PPQKE). One copy of the 6; approximate repeat lies at 59–63 (TPVHK). 5 consecutive repeat copies span residues 64 to 68 (PPQKE), 69 to 73 (PPRHK), 74 to 78 (PPQKE), 79 to 83 (PPRHK), and 84 to 88 (PPHKK). Residues 82 to 93 (HKPPHKKSHLHV) show a composition bias toward basic residues. Residues 101 to 110 (HPTEEHNIHF) show a composition bias toward basic and acidic residues.

The protein belongs to the plant proline-rich protein superfamily. ENOD12 family. Root nodules, stem and flower.

Its subcellular location is the secreted. The protein resides in the cell wall. Involved in the infection process during the plant-rhizobium interaction. The sequence is that of Early nodulin-12A (ENOD12A) from Pisum sativum (Garden pea).